The following is a 155-amino-acid chain: SsrA-binding protein (155 aa).

A disordered region spans residues Arg-136–Tyr-155.

Belongs to the SmpB family.

The protein resides in the cytoplasm. Required for rescue of stalled ribosomes mediated by trans-translation. Binds to transfer-messenger RNA (tmRNA), required for stable association of tmRNA with ribosomes. tmRNA and SmpB together mimic tRNA shape, replacing the anticodon stem-loop with SmpB. tmRNA is encoded by the ssrA gene; the 2 termini fold to resemble tRNA(Ala) and it encodes a 'tag peptide', a short internal open reading frame. During trans-translation Ala-aminoacylated tmRNA acts like a tRNA, entering the A-site of stalled ribosomes, displacing the stalled mRNA. The ribosome then switches to translate the ORF on the tmRNA; the nascent peptide is terminated with the 'tag peptide' encoded by the tmRNA and targeted for degradation. The ribosome is freed to recommence translation, which seems to be the essential function of trans-translation. This chain is SsrA-binding protein, found in Nostoc punctiforme (strain ATCC 29133 / PCC 73102).